Consider the following 634-residue polypeptide: Threonine--tRNA ligase (634 aa).

The TGS domain occupies 1–61 (MINIRFPDGS…NSNCELRLIT (61 aa)). A catalytic region spans residues 241-532 (DHRKIGKVLD…LIEHYAGNLP (292 aa)). Zn(2+) is bound by residues cysteine 332, histidine 383, and histidine 509.

This sequence belongs to the class-II aminoacyl-tRNA synthetase family. Homodimer. Zn(2+) is required as a cofactor.

The protein resides in the cytoplasm. The enzyme catalyses tRNA(Thr) + L-threonine + ATP = L-threonyl-tRNA(Thr) + AMP + diphosphate + H(+). In terms of biological role, catalyzes the attachment of threonine to tRNA(Thr) in a two-step reaction: L-threonine is first activated by ATP to form Thr-AMP and then transferred to the acceptor end of tRNA(Thr). Also edits incorrectly charged L-seryl-tRNA(Thr). This is Threonine--tRNA ligase from Francisella tularensis subsp. novicida (strain U112).